The sequence spans 112 residues: Protein FAM32A (112 aa).

Residues 15–35 (KGCGDMSLGKKKKKKNKANDQ) form a disordered region.

This sequence belongs to the FAM32 family.

The protein resides in the nucleus. Functionally, may induce G2 arrest and apoptosis. May also increase cell sensitivity to apoptotic stimuli. The polypeptide is Protein FAM32A (fam32a) (Xenopus tropicalis (Western clawed frog)).